Here is a 146-residue protein sequence, read N- to C-terminus: 3-hydroxyacyl-[acyl-carrier-protein] dehydratase FabZ (146 aa).

Residue H46 is part of the active site.

It belongs to the thioester dehydratase family. FabZ subfamily.

The protein localises to the cytoplasm. It carries out the reaction a (3R)-hydroxyacyl-[ACP] = a (2E)-enoyl-[ACP] + H2O. Functionally, involved in unsaturated fatty acids biosynthesis. Catalyzes the dehydration of short chain beta-hydroxyacyl-ACPs and long chain saturated and unsaturated beta-hydroxyacyl-ACPs. This chain is 3-hydroxyacyl-[acyl-carrier-protein] dehydratase FabZ, found in Acinetobacter baumannii (strain ATCC 17978 / DSM 105126 / CIP 53.77 / LMG 1025 / NCDC KC755 / 5377).